The sequence spans 65 residues: Bacteriocin amylovorin-L (65 aa).

A propeptide spanning residues Met1 to Gly15 is cleaved from the precursor. Residues Leu39–Ala59 form a helical membrane-spanning segment.

In terms of assembly, active lactobin is composed of two different peptides, one which is lactobin A.

Its subcellular location is the secreted. The protein localises to the host cell membrane. This heat stable bacteriocin inhibits the growth of closely related Lactobacillus species. It may act as a pore-forming protein, creating a channel in the cell membrane. It kills Lactobacillus helveticus ATCC 15009, but displays no activity towards Listeria species. The chain is Bacteriocin amylovorin-L (amyL) from Lactobacillus amylovorus.